Consider the following 249-residue polypeptide: 2,3,4,5-tetrahydropyridine-2,6-dicarboxylate N-acetyltransferase (249 aa).

It belongs to the transferase hexapeptide repeat family. DapH subfamily.

The enzyme catalyses (S)-2,3,4,5-tetrahydrodipicolinate + acetyl-CoA + H2O = L-2-acetamido-6-oxoheptanedioate + CoA. The protein operates within amino-acid biosynthesis; L-lysine biosynthesis via DAP pathway; LL-2,6-diaminopimelate from (S)-tetrahydrodipicolinate (acetylase route): step 1/3. Functionally, catalyzes the transfer of an acetyl group from acetyl-CoA to tetrahydrodipicolinate. The polypeptide is 2,3,4,5-tetrahydropyridine-2,6-dicarboxylate N-acetyltransferase (Fervidobacterium nodosum (strain ATCC 35602 / DSM 5306 / Rt17-B1)).